The primary structure comprises 357 residues: O-methyltransferase pgmB (357 aa).

D206 is an S-adenosyl-L-methionine binding site. H256 acts as the Proton acceptor in catalysis.

It belongs to the class I-like SAM-binding methyltransferase superfamily. Cation-independent O-methyltransferase family.

It participates in pigment biosynthesis. It functions in the pathway secondary metabolite biosynthesis. In terms of biological role, O-methyltransferase; part of the gene cluster that mediates the biosynthesis of pleosporalin A, ascomycone A, as well as a third cryptic naphthoquinone derived pigment, all responsible for the coloration of conidia. Specifically methylates position C-6 of the pgmA product 3-acetonyl-1,6,8-trihydroxy-2-naphthaldehyde to yield fusarubinaldehyde. The pathway begins with the biosynthesis of the cyclized heptaketide 3-acetonyl-1,6,8-trihydroxy-2-naphthaldehyde by the NR-PKS pgmA. The C-6 hydroxyl group is further methylated by the O-methyltransferase pgmB to yield fusarubinaldehyde which is in turn oxidized by the cytochrome P450 monooxygenase pgmC at C-9. The C-1 hydroxyl group is then methylated spontaneously. Although pgmE, pgmD and pgmH are essential for the production of pleosporalin A, it is not the case for the 2 other final products and it remains difficult to assign a specific function to each enzyme. PgmF and pgmG seem not to be involved in pigment biosynthesis although they were regulated by the cluster-specific transcription factor pgmR. The protein is O-methyltransferase pgmB of Aspergillus terreus (strain NIH 2624 / FGSC A1156).